Consider the following 167-residue polypeptide: Biogenesis of lysosome-related organelles complex 1 subunit 6 (167 aa).

Polar residues predominate over residues Met-1–Leu-11. Residues Met-1–Thr-38 form a disordered region. Positions Ala-102–Glu-160 form a coiled coil.

The protein belongs to the BLOC1S6 family. In terms of assembly, component of the biogenesis of lysosome-related organelles complex-1 (BLOC-1) composed of Blos1, Blos2, Blos3, Blos4, Dysb, Muted, Pldn and Snapin. Interacts with Blos1, Blos4 and Dysb.

The protein resides in the synapse. It localises to the cytoplasm. Its subcellular location is the cytoskeleton. It is found in the myofibril. The protein localises to the sarcomere. The protein resides in the z line. Functionally, component of the biogenesis of lysosome-related organelles complex-1 (BLOC-1) involved in pigment granule biogenesis and membrane trafficking in synapses. In response to high synaptic activity at neuromuscular junctions, plays a key role in promoting efficient synaptic vesicle recycling and re-formation through early endosomes. This chain is Biogenesis of lysosome-related organelles complex 1 subunit 6, found in Drosophila melanogaster (Fruit fly).